We begin with the raw amino-acid sequence, 82 residues long: NADH-ubiquinone oxidoreductase 9.5 kDa subunit (82 aa).

Residues 25–43 (AYFYSCVIAGLGPVFLTVV) traverse the membrane as a helical segment.

The protein belongs to the complex I NDUFA3 subunit family. As to quaternary structure, complex I is composed of about 40 different subunits.

Its subcellular location is the mitochondrion inner membrane. In terms of biological role, accessory subunit of the mitochondrial membrane respiratory chain NADH dehydrogenase (Complex I), that is believed not to be involved in catalysis. Complex I functions in the transfer of electrons from NADH to the respiratory chain. The immediate electron acceptor for the enzyme is believed to be ubiquinone. This subunit binds ubiquinone. This chain is NADH-ubiquinone oxidoreductase 9.5 kDa subunit (nuo9.5), found in Neurospora crassa (strain ATCC 24698 / 74-OR23-1A / CBS 708.71 / DSM 1257 / FGSC 987).